The chain runs to 106 residues: MSYQLYRNTTLGNTLQESLDELIQYGQITPGLAFKVLLQFDKSINNALNQRVKARVTFKAGKLNTYRFCDNVWTLMLNDVEFREVHEIVKVDKVKIVACDGKSGEF.

Belongs to the TFIIA subunit 2 family. In terms of assembly, TFIIA is a heterodimer of the large unprocessed subunit 1 and a small subunit gamma. It was originally believed to be a heterotrimer of an alpha (p30), a beta (p20) and a gamma (p14) subunit. Forms a complex with Moonshiner/CG12721 and Trf2. As to expression, ubiquitous.

The protein localises to the nucleus. In terms of biological role, TFIIA is a component of the transcription machinery of RNA polymerase II and plays an important role in transcriptional activation. TFIIA in a complex with TBP mediates transcriptional activity. Part of a rhi-dependent transcription machinery that enables the generation of piRNA precursors from heterochromatin while maintaining the suppression of transposon-encoded promoters and enhancers. Forms a complex with Moonshiner/CG12721 and Trf2 which recruit transcriptional machinery to heterochromatin to initiate the bidirectional transcription of piRNA clusters, by interacting with the RDC (rhi, del and cuff) complex that binds to repressive H3K9me3 marks in the chromatin. This mechanism allows transcription to occur in piRNA clusters despite the lack of proper promoter elements and in the presence of the repressive H3K9me3 mark. In Drosophila melanogaster (Fruit fly), this protein is Transcription initiation factor IIA subunit 2 (TfIIA-S).